The chain runs to 729 residues: Fatty acid oxidation complex subunit alpha (729 aa).

Residues 1–189 (MLYKGDTLYL…KIGLVDGVVK (189 aa)) form an enoyl-CoA hydratase/isomerase region. Residue D296 coordinates substrate. Positions 311-729 (ETPKQAAVLG…ARPVGSLKTA (419 aa)) are 3-hydroxyacyl-CoA dehydrogenase. NAD(+) is bound by residues M324, D343, 400–402 (VVE), K407, and S429. The For 3-hydroxyacyl-CoA dehydrogenase activity role is filled by H450. Residue N453 participates in NAD(+) binding. The substrate site is built by N500 and Y660. The segment at 708-729 (RHNEPYYPPVEPARPVGSLKTA) is disordered.

This sequence in the N-terminal section; belongs to the enoyl-CoA hydratase/isomerase family. The protein in the C-terminal section; belongs to the 3-hydroxyacyl-CoA dehydrogenase family. As to quaternary structure, heterotetramer of two alpha chains (FadB) and two beta chains (FadA).

It carries out the reaction a (3S)-3-hydroxyacyl-CoA + NAD(+) = a 3-oxoacyl-CoA + NADH + H(+). The catalysed reaction is a (3S)-3-hydroxyacyl-CoA = a (2E)-enoyl-CoA + H2O. It catalyses the reaction a 4-saturated-(3S)-3-hydroxyacyl-CoA = a (3E)-enoyl-CoA + H2O. The enzyme catalyses (3S)-3-hydroxybutanoyl-CoA = (3R)-3-hydroxybutanoyl-CoA. It carries out the reaction a (3Z)-enoyl-CoA = a 4-saturated (2E)-enoyl-CoA. The catalysed reaction is a (3E)-enoyl-CoA = a 4-saturated (2E)-enoyl-CoA. The protein operates within lipid metabolism; fatty acid beta-oxidation. In terms of biological role, involved in the aerobic and anaerobic degradation of long-chain fatty acids via beta-oxidation cycle. Catalyzes the formation of 3-oxoacyl-CoA from enoyl-CoA via L-3-hydroxyacyl-CoA. It can also use D-3-hydroxyacyl-CoA and cis-3-enoyl-CoA as substrate. In Salmonella newport (strain SL254), this protein is Fatty acid oxidation complex subunit alpha.